The following is a 328-amino-acid chain: MANSASPEQNQNHCSAINNSIPLMQGNLPTLTLSGKIRVTVTFFLFLLSATFNASFLLKLQKWTQKKEKGKKLSRMKLLLKHLTLANLLETLIVMPLDGMWNITVQWYAGELLCKVLSYLKLFSMYAPAFMMVVISLDRSLAITRPLALKSNSKVGQSMVGLAWILSSVFAGPQLYIFRMIHLADSSGQTKVFSQCVTHCSFSQWWHQAFYNFFTFSCLFIIPLFIMLICNAKIIFTLTRVLHQDPHELQLNQSKNNIPRARLKTLKMTVAFATSFTVCWTPYYVLGIWYWFDPEMLNRLSDPVNHFFFLFAFLNPCFDPLIYGYFSL.

The Extracellular portion of the chain corresponds to 1-38; the sequence is MANSASPEQNQNHCSAINNSIPLMQGNLPTLTLSGKIR. N18 is a glycosylation site (N-linked (GlcNAc...) asparagine). Residues 39–58 form a helical membrane-spanning segment; that stretch reads VTVTFFLFLLSATFNASFLL. Topologically, residues 59–77 are cytoplasmic; it reads KLQKWTQKKEKGKKLSRMK. The chain crosses the membrane as a helical span at residues 78-97; sequence LLLKHLTLANLLETLIVMPL. Residues 98–115 are Extracellular-facing; that stretch reads DGMWNITVQWYAGELLCK. N102 carries N-linked (GlcNAc...) asparagine glycosylation. Residues C114 and C196 are joined by a disulfide bond. A helical membrane pass occupies residues 116–137; that stretch reads VLSYLKLFSMYAPAFMMVVISL. Over 138–164 the chain is Cytoplasmic; the sequence is DRSLAITRPLALKSNSKVGQSMVGLAW. The chain crosses the membrane as a helical span at residues 165-184; sequence ILSSVFAGPQLYIFRMIHLA. The Extracellular segment spans residues 185–212; sequence DSSGQTKVFSQCVTHCSFSQWWHQAFYN. The helical transmembrane segment at 213 to 232 threads the bilayer; that stretch reads FFTFSCLFIIPLFIMLICNA. The Cytoplasmic segment spans residues 233–281; it reads KIIFTLTRVLHQDPHELQLNQSKNNIPRARLKTLKMTVAFATSFTVCWT. The chain crosses the membrane as a helical span at residues 282–300; the sequence is PYYVLGIWYWFDPEMLNRL. Topologically, residues 301-306 are extracellular; it reads SDPVNH. A helical membrane pass occupies residues 307 to 326; the sequence is FFFLFAFLNPCFDPLIYGYF. At 327-328 the chain is on the cytoplasmic side; the sequence is SL.

This sequence belongs to the G-protein coupled receptor 1 family. Pituitary, ovary, testis, breast and prostate but not in liver and spleen.

Its subcellular location is the cell membrane. Functionally, receptor for gonadotropin releasing hormone (GnRH) that mediates the action of GnRH to stimulate the secretion of the gonadotropic hormones luteinizing hormone (LH) and follicle-stimulating hormone (FSH). This receptor mediates its action by association with G-proteins that activate a phosphatidylinositol-calcium second messenger system. Isoform 2 may act as an inhibitor of GnRH-R signaling. This Homo sapiens (Human) protein is Gonadotropin-releasing hormone receptor (GNRHR).